The chain runs to 367 residues: Peptide chain release factor 2 (367 aa).

At Gln250 the chain carries N5-methylglutamine.

It belongs to the prokaryotic/mitochondrial release factor family. Methylated by PrmC. Methylation increases the termination efficiency of RF2.

It localises to the cytoplasm. Peptide chain release factor 2 directs the termination of translation in response to the peptide chain termination codons UGA and UAA. In Saccharopolyspora erythraea (strain ATCC 11635 / DSM 40517 / JCM 4748 / NBRC 13426 / NCIMB 8594 / NRRL 2338), this protein is Peptide chain release factor 2.